The sequence spans 513 residues: Maturase K (513 aa).

This sequence belongs to the intron maturase 2 family. MatK subfamily.

It localises to the plastid. Its subcellular location is the chloroplast. Usually encoded in the trnK tRNA gene intron. Probably assists in splicing its own and other chloroplast group II introns. The sequence is that of Maturase K from Phaseolus vulgaris (Kidney bean).